Here is a 313-residue protein sequence, read N- to C-terminus: MNVGIKGFGAYAPEKIIDNAYFEQFLDTSDEWISKMTGIKERHWADDDQDTSDLAYEASLKAIADAGIQPEDIDMIIVATATGDMPFPTVANMLQERLGTGKVASMDQLAACSGFMYSMITAKQYVQSGDYHNILVVGADKLSKITDLTDRSTAVLFGDGAGAVIIGEVSDGRGIISYEMGSDGTGGKHLYLDKDTGKLKMNGREVFKFAVRIMGDASTRVVEKANLTSDDIDLFIPHQANIRIMESARERLGISKDKMSVSVNKYGNTSAASIPLSIDQELKNGKIKDDDTIVLVGFGGGLTWGAMTIKWGK.

Active-site residues include C112 and H238. Residues 239–243 are ACP-binding; that stretch reads QANIR. N268 is a catalytic residue.

The protein belongs to the thiolase-like superfamily. FabH family. In terms of assembly, homodimer.

It localises to the cytoplasm. It catalyses the reaction malonyl-[ACP] + acetyl-CoA + H(+) = 3-oxobutanoyl-[ACP] + CO2 + CoA. It functions in the pathway lipid metabolism; fatty acid biosynthesis. Functionally, catalyzes the condensation reaction of fatty acid synthesis by the addition to an acyl acceptor of two carbons from malonyl-ACP. Catalyzes the first condensation reaction which initiates fatty acid synthesis and may therefore play a role in governing the total rate of fatty acid production. Possesses both acetoacetyl-ACP synthase and acetyl transacylase activities. Its substrate specificity determines the biosynthesis of branched-chain and/or straight-chain of fatty acids. In Staphylococcus aureus (strain COL), this protein is Beta-ketoacyl-[acyl-carrier-protein] synthase III.